Reading from the N-terminus, the 161-residue chain is Nucleotide-binding protein SO_3815 (161 aa).

Belongs to the YajQ family.

Functionally, nucleotide-binding protein. This is Nucleotide-binding protein SO_3815 from Shewanella oneidensis (strain ATCC 700550 / JCM 31522 / CIP 106686 / LMG 19005 / NCIMB 14063 / MR-1).